The following is a 513-amino-acid chain: Bifunctional purine biosynthesis protein PurH (513 aa).

The MGS-like domain maps to 1-145 (MTKRALISVS…KNYQDVTAVV (145 aa)).

It belongs to the PurH family.

It carries out the reaction (6R)-10-formyltetrahydrofolate + 5-amino-1-(5-phospho-beta-D-ribosyl)imidazole-4-carboxamide = 5-formamido-1-(5-phospho-D-ribosyl)imidazole-4-carboxamide + (6S)-5,6,7,8-tetrahydrofolate. The enzyme catalyses IMP + H2O = 5-formamido-1-(5-phospho-D-ribosyl)imidazole-4-carboxamide. It functions in the pathway purine metabolism; IMP biosynthesis via de novo pathway; 5-formamido-1-(5-phospho-D-ribosyl)imidazole-4-carboxamide from 5-amino-1-(5-phospho-D-ribosyl)imidazole-4-carboxamide (10-formyl THF route): step 1/1. Its pathway is purine metabolism; IMP biosynthesis via de novo pathway; IMP from 5-formamido-1-(5-phospho-D-ribosyl)imidazole-4-carboxamide: step 1/1. The protein is Bifunctional purine biosynthesis protein PurH of Enterococcus faecalis (strain ATCC 700802 / V583).